A 515-amino-acid polypeptide reads, in one-letter code: Histidine ammonia-lyase (515 aa).

The 5-imidazolinone (Ala-Gly) cross-link spans 146–148 (ASG). A 2,3-didehydroalanine (Ser) modification is found at Ser-147.

It belongs to the PAL/histidase family. In terms of processing, contains an active site 4-methylidene-imidazol-5-one (MIO), which is formed autocatalytically by cyclization and dehydration of residues Ala-Ser-Gly.

It is found in the cytoplasm. The enzyme catalyses L-histidine = trans-urocanate + NH4(+). Its pathway is amino-acid degradation; L-histidine degradation into L-glutamate; N-formimidoyl-L-glutamate from L-histidine: step 1/3. This Ralstonia nicotianae (strain ATCC BAA-1114 / GMI1000) (Ralstonia solanacearum) protein is Histidine ammonia-lyase (hutH).